A 430-amino-acid polypeptide reads, in one-letter code: Phosphomethylpyrimidine synthase 2 (430 aa).

Residues asparagine 66, methionine 95, tyrosine 124, histidine 164, 186 to 188 (SRG), 227 to 230 (DGFR), and glutamate 266 each bind substrate. A Zn(2+)-binding site is contributed by histidine 270. Tyrosine 293 is a substrate binding site. Zn(2+) is bound at residue histidine 334. [4Fe-4S] cluster is bound by residues cysteine 411, cysteine 414, and cysteine 418.

This sequence belongs to the ThiC family. Homodimer. Requires [4Fe-4S] cluster as cofactor.

The catalysed reaction is 5-amino-1-(5-phospho-beta-D-ribosyl)imidazole + S-adenosyl-L-methionine = 4-amino-2-methyl-5-(phosphooxymethyl)pyrimidine + CO + 5'-deoxyadenosine + formate + L-methionine + 3 H(+). Its pathway is cofactor biosynthesis; thiamine diphosphate biosynthesis. Functionally, catalyzes the synthesis of the hydroxymethylpyrimidine phosphate (HMP-P) moiety of thiamine from aminoimidazole ribotide (AIR) in a radical S-adenosyl-L-methionine (SAM)-dependent reaction. In Syntrophotalea carbinolica (strain DSM 2380 / NBRC 103641 / GraBd1) (Pelobacter carbinolicus), this protein is Phosphomethylpyrimidine synthase 2.